The primary structure comprises 160 residues: Phosphoribosyl-ATP pyrophosphatase (160 aa).

The protein belongs to the PRA-PH family.

It localises to the cytoplasm. The enzyme catalyses 1-(5-phospho-beta-D-ribosyl)-ATP + H2O = 1-(5-phospho-beta-D-ribosyl)-5'-AMP + diphosphate + H(+). It participates in amino-acid biosynthesis; L-histidine biosynthesis; L-histidine from 5-phospho-alpha-D-ribose 1-diphosphate: step 2/9. This is Phosphoribosyl-ATP pyrophosphatase from Granulibacter bethesdensis (strain ATCC BAA-1260 / CGDNIH1).